Here is a 549-residue protein sequence, read N- to C-terminus: Hydroxylamine reductase (549 aa).

[4Fe-4S] cluster is bound by residues C3, C6, C15, and C21. 8 residues coordinate hybrid [4Fe-2O-2S] cluster: H244, E268, C313, C405, C433, C458, E492, and K494. Position 405 is a cysteine persulfide (C405).

It belongs to the HCP family. It depends on [4Fe-4S] cluster as a cofactor. Hybrid [4Fe-2O-2S] cluster serves as cofactor.

It localises to the cytoplasm. The enzyme catalyses A + NH4(+) + H2O = hydroxylamine + AH2 + H(+). Its function is as follows. Catalyzes the reduction of hydroxylamine to form NH(3) and H(2)O. The polypeptide is Hydroxylamine reductase (Crocosphaera subtropica (strain ATCC 51142 / BH68) (Cyanothece sp. (strain ATCC 51142))).